The primary structure comprises 445 residues: GTPase Der (445 aa).

EngA-type G domains are found at residues 2-166 and 182-355; these read FRVA…PEYE and IKVA…NQAW. GTP contacts are provided by residues 8-15, 55-59, 118-121, 188-195, 235-239, and 300-303; these read GIPNVGKS, DTGGY, NKID, GKPNAGKS, and DTAGM. A KH-like domain is found at 356-440; the sequence is KRVGTGQLNR…PIKLIFRGKE (85 aa).

The protein belongs to the TRAFAC class TrmE-Era-EngA-EngB-Septin-like GTPase superfamily. EngA (Der) GTPase family. As to quaternary structure, associates with the 50S ribosomal subunit.

GTPase that plays an essential role in the late steps of ribosome biogenesis. In Sulfurihydrogenibium sp. (strain YO3AOP1), this protein is GTPase Der.